A 296-amino-acid chain; its full sequence is MNNNAFHFPVLLDAICKLIEDLPVKSDLIYIDSTLGEGVHAKAILEKYDFLSLVGIERDPQILERARQFLSIFEERITYFNDWFDNFFVNYPLNVKANFILVDLGISMFHYKGSKKGFSFLEDEPLDMRLCSSSCKISAAEIVNTYSKYDLEALIYDLSNEHYSRRISKAIVEYRKIKKIETTKELQSIISKVYPFSKVKINPATKTFQALRIYVNDELARLKRSLPFWVENLAKDGILAIITFHSIEDRIVKDFFRSLSCDLYAKISKKPIMPSFDEIKKNKPSRSAKLRVIKKL.

S-adenosyl-L-methionine contacts are provided by residues 38-40 (GVH), glutamate 57, phenylalanine 88, aspartate 103, and histidine 110.

The protein belongs to the methyltransferase superfamily. RsmH family.

It is found in the cytoplasm. The enzyme catalyses cytidine(1402) in 16S rRNA + S-adenosyl-L-methionine = N(4)-methylcytidine(1402) in 16S rRNA + S-adenosyl-L-homocysteine + H(+). In terms of biological role, specifically methylates the N4 position of cytidine in position 1402 (C1402) of 16S rRNA. The protein is Ribosomal RNA small subunit methyltransferase H of Borreliella burgdorferi (strain ZS7) (Borrelia burgdorferi).